The chain runs to 1202 residues: Putative late blight resistance protein homolog R1B-8 (1202 aa).

Coiled coils occupy residues 345-368 and 437-459; these read RYSD…ESLQ and LRMN…RLLN. Residues 426–741 enclose the NB-ARC domain; that stretch reads IARTSSQLAR…ISESFIKSCE (316 aa). 471-478 contacts ATP; it reads GMPGLGKT. 7 LRR repeats span residues 865–889, 908–936, 1011–1036, 1040–1059, 1060–1084, 1086–1111, and 1128–1151; these read FKFL…LFYL, LWNL…VWDM, PIRL…ISAP, YLKL…TADH, LKHL…VSNG, FPQL…VFPN, and SCFM…VVQS.

It belongs to the disease resistance NB-LRR family.

The protein localises to the cytoplasm. It is found in the membrane. Its function is as follows. Confers resistance to late blight (Phytophthora infestans) races carrying the avirulence gene Avr1. Resistance proteins guard the plant against pathogens that contain an appropriate avirulence protein via an indirect interaction with this avirulence protein. That triggers a defense system including the hypersensitive response, which restricts the pathogen growth. The polypeptide is Putative late blight resistance protein homolog R1B-8 (R1B-8) (Solanum demissum (Wild potato)).